The chain runs to 385 residues: Mitochondrial protein C2orf69 (385 aa).

A mitochondrion-targeting transit peptide spans 1-24 (MWGFRLLRSPPLLLLLPQLGIGNA).

It belongs to the C2orf69 family.

It is found in the mitochondrion matrix. Functionally, may play a role in the respiratory chain. The protein is Mitochondrial protein C2orf69 (C2orf69) of Homo sapiens (Human).